Reading from the N-terminus, the 393-residue chain is Stearoyl-[acyl-carrier-protein] 9-desaturase, chloroplastic (393 aa).

The N-terminal 31 residues, 1-31, are a transit peptide targeting the chloroplast; it reads MASMVAFRPEAFLCFSPPKTTRSTRSPRISM. 6 residues coordinate Fe cation: Glu135, Glu173, His176, Glu226, Glu259, and His262.

It belongs to the fatty acid desaturase type 2 family. As to quaternary structure, homodimer. Fe(2+) serves as cofactor.

The protein localises to the plastid. It localises to the chloroplast. The enzyme catalyses octadecanoyl-[ACP] + 2 reduced [2Fe-2S]-[ferredoxin] + O2 + 2 H(+) = (9Z)-octadecenoyl-[ACP] + 2 oxidized [2Fe-2S]-[ferredoxin] + 2 H2O. It participates in lipid metabolism; fatty acid metabolism. Converts stearoyl-ACP to oleoyl-ACP by introduction of a cis double bond between carbons 9 and 10 of the acyl chain. The polypeptide is Stearoyl-[acyl-carrier-protein] 9-desaturase, chloroplastic (Elaeis guineensis var. tenera (Oil palm)).